The chain runs to 350 residues: Twinfilin-1 (350 aa).

Residue Ser-2 is modified to N-acetylserine. The 138-residue stretch at Ser-2–Leu-139 folds into the ADF-H 1 domain. Phosphoserine occurs at positions 143 and 277. Positions Leu-175 to His-313 constitute an ADF-H 2 domain. A Phosphotyrosine modification is found at Tyr-309. Positions Gln-316 to Asp-350 are disordered. Thr-349 carries the phosphothreonine modification.

Belongs to the actin-binding proteins ADF family. Twinfilin subfamily. In terms of assembly, interacts with G-actin; ADP-actin form and capping protein (CP). May also be able to interact with TWF2 and phosphoinositides, PI(4,5)P2. When bound to PI(4,5)P2, it is down-regulated. Interacts with ACTG1. Phosphorylated on serine and threonine residues. As to expression, expressed at high levels in the colon, testis, ovary, prostate and lung. Expressed at lower levels in the brain, bladder and heart. Not detected in liver.

It localises to the cytoplasm. The protein localises to the cytoskeleton. In terms of biological role, actin-binding protein involved in motile and morphological processes. Inhibits actin polymerization, likely by sequestering G-actin. By capping the barbed ends of filaments, it also regulates motility. Seems to play an important role in clathrin-mediated endocytosis and distribution of endocytic organelles. The polypeptide is Twinfilin-1 (TWF1) (Homo sapiens (Human)).